Reading from the N-terminus, the 214-residue chain is Pyrrolidone-carboxylate peptidase 2 (214 aa).

Active-site residues include Glu78, Cys141, and His165.

Belongs to the peptidase C15 family. In terms of assembly, homotetramer.

It is found in the cytoplasm. The enzyme catalyses Release of an N-terminal pyroglutamyl group from a polypeptide, the second amino acid generally not being Pro.. Removes 5-oxoproline from various penultimate amino acid residues except L-proline. The polypeptide is Pyrrolidone-carboxylate peptidase 2 (Streptococcus pneumoniae serotype 4 (strain ATCC BAA-334 / TIGR4)).